The following is a 291-amino-acid chain: Quinol oxidase subunit 2 (291 aa).

Residues Met-1 to Lys-28 form the signal peptide. A run of 2 helical transmembrane segments spans residues Ser-49–Ile-69 and Leu-91–Val-111.

This sequence belongs to the cytochrome c oxidase subunit 2 family.

Its subcellular location is the cell membrane. The catalysed reaction is 2 a quinol + O2 = 2 a quinone + 2 H2O. Its function is as follows. Catalyzes quinol oxidation with the concomitant reduction of oxygen to water. Subunit II transfers the electrons from a quinol to the binuclear center of the catalytic subunit I. The chain is Quinol oxidase subunit 2 from Bacillus cereus (strain ATCC 14579 / DSM 31 / CCUG 7414 / JCM 2152 / NBRC 15305 / NCIMB 9373 / NCTC 2599 / NRRL B-3711).